The primary structure comprises 589 residues: Glutamine--fructose-6-phosphate aminotransferase [isomerizing] (589 aa).

Catalysis depends on Cys-2, which acts as the Nucleophile; for GATase activity. A Glutamine amidotransferase type-2 domain is found at 2-221 (CGIIGIVSLR…DDELGFITPE (220 aa)). 2 consecutive SIS domains span residues 286–426 (VIEE…KMEK) and 445–579 (IGEE…PDKP). Lys-584 (for Fru-6P isomerization activity) is an active-site residue.

As to quaternary structure, homodimer.

It localises to the cytoplasm. The enzyme catalyses D-fructose 6-phosphate + L-glutamine = D-glucosamine 6-phosphate + L-glutamate. Its function is as follows. Catalyzes the first step in hexosamine metabolism, converting fructose-6P into glucosamine-6P using glutamine as a nitrogen source. The protein is Glutamine--fructose-6-phosphate aminotransferase [isomerizing] of Sulfurisphaera tokodaii (strain DSM 16993 / JCM 10545 / NBRC 100140 / 7) (Sulfolobus tokodaii).